We begin with the raw amino-acid sequence, 915 residues long: Protein SLFN14 (915 aa).

Basic residues predominate over residues 157 to 167 (AAQRGRRRLHP). A disordered region spans residues 157–176 (AAQRGRRRLHPPRASNSNLQ). The tract at residues 204–389 (ESTHVEFKRF…KVLEFKGALQ (186 aa)) is required for endoribonuclease activity. A required for ribosome binding region spans residues 390–569 (RHLFPVTQKT…QLGCEFFNLL (180 aa)).

In terms of assembly, associates with ribosomes in an ATP-independent manner. Mg(2+) serves as cofactor. The cofactor is Mn(2+). Detected in reticulocytes (at protein level).

It localises to the nucleus. Its function is as follows. Shows no ribosome-associated and endoribonuclease activities. In terms of biological role, displays polysome-associated endoribonuclease activity towards mRNAs and rRNAs. May play a role in RNA surveillance pathways by recognizing stalled ribosomes and triggering endonucleolytic cleavage of aberrant mRNAs. Cleaves RNAs in a magnesium-, manganese-dependent and ATP-independent manner. Involved in correct maturation of megakaryocytes and especially important for proplatelet extension. This Oryctolagus cuniculus (Rabbit) protein is Protein SLFN14.